The sequence spans 352 residues: Serine/threonine-protein phosphatase 2A activator 2 (352 aa).

It belongs to the PTPA-type PPIase family.

It is found in the cytoplasm. It carries out the reaction [protein]-peptidylproline (omega=180) = [protein]-peptidylproline (omega=0). Its function is as follows. PPIases accelerate the folding of proteins. It catalyzes the cis-trans isomerization of proline imidic peptide bonds in oligopeptides. Acts as a regulatory subunit for PP2A-like phosphatases modulating their activity or substrate specificity, probably by inducing a conformational change in the catalytic subunit, a direct target of the PPIase. Can reactivate inactive phosphatase PP2A-phosphatase methylesterase complexes (PP2Ai) in presence of ATP and Mg(2+) by dissociating the inactive form from the complex. The protein is Serine/threonine-protein phosphatase 2A activator 2 (rrd2) of Schizosaccharomyces pombe (strain 972 / ATCC 24843) (Fission yeast).